The primary structure comprises 395 residues: S-adenosylmethionine synthase (395 aa).

His-16 serves as a coordination point for ATP. Asp-18 contacts Mg(2+). Glu-44 contacts K(+). Residues Glu-57 and Gln-100 each contribute to the L-methionine site. A flexible loop region spans residues 100-110 (QSTDIAQGVNE). Residues 174 to 176 (DAK), 241 to 242 (RF), Asp-250, 256 to 257 (RK), Ala-273, and Lys-277 each bind ATP. Asp-250 contacts L-methionine. Lys-281 contacts L-methionine.

The protein belongs to the AdoMet synthase family. Homotetramer; dimer of dimers. The cofactor is Mg(2+). K(+) serves as cofactor.

The protein localises to the cytoplasm. It catalyses the reaction L-methionine + ATP + H2O = S-adenosyl-L-methionine + phosphate + diphosphate. It functions in the pathway amino-acid biosynthesis; S-adenosyl-L-methionine biosynthesis; S-adenosyl-L-methionine from L-methionine: step 1/1. Catalyzes the formation of S-adenosylmethionine (AdoMet) from methionine and ATP. The overall synthetic reaction is composed of two sequential steps, AdoMet formation and the subsequent tripolyphosphate hydrolysis which occurs prior to release of AdoMet from the enzyme. This Streptococcus uberis (strain ATCC BAA-854 / 0140J) protein is S-adenosylmethionine synthase.